A 581-amino-acid polypeptide reads, in one-letter code: Intermediate filament protein ifa-2 (581 aa).

Disordered regions lie at residues 1–35 (MTDPDSYRSSITSRPSFNRTVTSSSQNYGAPGSGN) and 47–68 (SSVSSGLSPYGQNAASTIRDNR). The segment at 1 to 74 (MTDPDSYRSS…RDNREREKKE (74 aa)) is head. Positions 7-28 (YRSSITSRPSFNRTVTSSSQNY) are enriched in polar residues. The IF rod domain occupies 71–424 (EKKEIMELND…QMLEGNSEGN (354 aa)). The tract at residues 75-106 (IMELNDRLASYIEKVRFLDAQNRKLDADLKML) is coil 1A. Residues 107–120 (QGRFGKSTGSVKVM) are linker 1. Residues 121–258 (YEMEITTATN…RGFETELKEL (138 aa)) are coil 1B. A linker 12 region spans residues 259-276 (QAQAARDTTSENREYFKN). Positions 277–424 (ELANAMRDIR…QMLEGNSEGN (148 aa)) are coil 2. Positions 425-578 (GLRQLVEKVV…THIQRQSQQT (154 aa)) are tail. Positions 449-469 (RVVKGEHSSRTSYQRSAKGNV) are disordered. Positions 457-574 (SRTSYQRSAK…EERATHIQRQ (118 aa)) constitute an LTD domain.

This sequence belongs to the intermediate filament family. As to quaternary structure, forms some heteromeric filaments with ifb-1. Mainly expressed in regions of the hypodermis adjacent to muscle. Expressed in longitudinal stripes where the mechanosensory neurons interface with the hypodermis. Also expressed to the uterine seam and within the uterine-vulval cells.

The protein localises to the cell junction. The protein resides in the hemidesmosome. Cytoplasmic intermediate filaments provide mechanical strength to cells. Essential protein, involved in attachment structures in epidermal cells that connect muscles to the external cuticle. Probably acts by forming hypodermal hemidesmosome complexes that help mediate muscle-cuticle force transduction. Although expressed during embryogenesis, it is not required for embryonic development of muscle-cuticle linkages nor for the localization of other proteins to the hemidesmosomes in embryos. In Caenorhabditis elegans, this protein is Intermediate filament protein ifa-2.